We begin with the raw amino-acid sequence, 78 residues long: LYR motif-containing protein 9 (78 aa).

It belongs to the complex I LYR family. LYRM9 subfamily.

In Rattus norvegicus (Rat), this protein is LYR motif-containing protein 9 (Lyrm9).